The primary structure comprises 181 residues: ATP synthase subunit delta (181 aa).

The protein belongs to the ATPase delta chain family. As to quaternary structure, F-type ATPases have 2 components, F(1) - the catalytic core - and F(0) - the membrane proton channel. F(1) has five subunits: alpha(3), beta(3), gamma(1), delta(1), epsilon(1). F(0) has three main subunits: a(1), b(2) and c(10-14). The alpha and beta chains form an alternating ring which encloses part of the gamma chain. F(1) is attached to F(0) by a central stalk formed by the gamma and epsilon chains, while a peripheral stalk is formed by the delta and b chains.

It localises to the cell inner membrane. F(1)F(0) ATP synthase produces ATP from ADP in the presence of a proton or sodium gradient. F-type ATPases consist of two structural domains, F(1) containing the extramembraneous catalytic core and F(0) containing the membrane proton channel, linked together by a central stalk and a peripheral stalk. During catalysis, ATP synthesis in the catalytic domain of F(1) is coupled via a rotary mechanism of the central stalk subunits to proton translocation. Its function is as follows. This protein is part of the stalk that links CF(0) to CF(1). It either transmits conformational changes from CF(0) to CF(1) or is implicated in proton conduction. This is ATP synthase subunit delta from Cupriavidus taiwanensis (strain DSM 17343 / BCRC 17206 / CCUG 44338 / CIP 107171 / LMG 19424 / R1) (Ralstonia taiwanensis (strain LMG 19424)).